Here is a 95-residue protein sequence, read N- to C-terminus: Small ribosomal subunit protein uS19 (95 aa).

The disordered stretch occupies residues 76 to 95; sequence PTRRFGGHADKKAKKGELKK. A compositionally biased stretch (basic and acidic residues) spans 82–95; that stretch reads GHADKKAKKGELKK.

This sequence belongs to the universal ribosomal protein uS19 family.

Its function is as follows. Protein S19 forms a complex with S13 that binds strongly to the 16S ribosomal RNA. The polypeptide is Small ribosomal subunit protein uS19 (Thermotoga neapolitana (strain ATCC 49049 / DSM 4359 / NBRC 107923 / NS-E)).